The chain runs to 356 residues: Dihydroorotate dehydrogenase (quinone) (356 aa).

FMN-binding positions include 60-64 and S84; that span reads AGFDK. Substrate is bound at residue K64. Residue 109–113 participates in substrate binding; the sequence is NRFGF. Residues N140 and N171 each contribute to the FMN site. N171 provides a ligand contact to substrate. S174 functions as the Nucleophile in the catalytic mechanism. N176 contributes to the substrate binding site. FMN contacts are provided by K216 and G244. 245 to 246 lines the substrate pocket; it reads NT. Residues G267, G296, and 317-318 each bind FMN; that span reads YS.

The protein belongs to the dihydroorotate dehydrogenase family. Type 2 subfamily. Monomer. Requires FMN as cofactor.

It is found in the cell membrane. It catalyses the reaction (S)-dihydroorotate + a quinone = orotate + a quinol. It functions in the pathway pyrimidine metabolism; UMP biosynthesis via de novo pathway; orotate from (S)-dihydroorotate (quinone route): step 1/1. Functionally, catalyzes the conversion of dihydroorotate to orotate with quinone as electron acceptor. The sequence is that of Dihydroorotate dehydrogenase (quinone) from Azorhizobium caulinodans (strain ATCC 43989 / DSM 5975 / JCM 20966 / LMG 6465 / NBRC 14845 / NCIMB 13405 / ORS 571).